A 326-amino-acid polypeptide reads, in one-letter code: Lipid droplet-associated hydrolase (326 aa).

Catalysis depends on Ser140, which acts as the Nucleophile. Catalysis depends on charge relay system residues Asp272 and His301.

Belongs to the AB hydrolase superfamily. LDAH family. Expressed in liver, adrenal gland, prostate, spleen, kidney, brown and white adipose tissue, testis and to a lesser extent in brain (at protein level). Expressed in peritoneal macrophages and bone marrow-derived macrophages (at protein level). Highly expressed in macrophage and foam cell-rich areas in atherosclerotic lesions (at protein level). mRNA, but no protein, expressed in heart and muscle.

The protein resides in the lipid droplet. Its subcellular location is the endoplasmic reticulum. It carries out the reaction a cholesterol ester + H2O = cholesterol + a fatty acid + H(+). Its function is as follows. Probable serine lipid hydrolase associated with lipid droplets. Has low cholesterol esterase activity. Appears to lack triglyceride lipase activity. Involved in cholesterol and triglyceride homeostasis; stimulates cellular triglyceride accumulation and cellular cholesterol release. Acts antagonistically with PNPLA2/ATGL in regulation of cellular lipid stores. May regulate triglyceride accumulation indirectly through stimulation of PNPLA2/ATGL ubiquitination and proteasomal degradation. Promotes microtubule-dependent lipid droplet fusion. Highly expressed in macrophage-rich areas in atherosclerotic lesions, suggesting that it could promote cholesterol ester turnover in macrophages. In terms of biological role, stimulates cellular triglyceride accumulation and lipid droplet fusion. Functionally, associates with lipid droplets but does not stimulate cellular triglyceride accumulation, lipid droplet fusion or ATGL proteasomal degradation. This chain is Lipid droplet-associated hydrolase, found in Mus musculus (Mouse).